The following is a 907-amino-acid chain: Nuclear receptor coactivator 7 (907 aa).

Residues Met-1–Gln-12 show a composition bias toward basic and acidic residues. Residues Met-1 to Glu-29 adopt a coiled-coil conformation. Disordered regions lie at residues Met-1–Ser-51, Asp-63–Lys-83, and Tyr-99–Pro-121. Residues Lys-25 to Ser-41 are compositionally biased toward polar residues. 2 stretches are compositionally biased toward basic and acidic residues: residues Ala-68–Glu-78 and Tyr-99–Met-116. Residues Ile-125–Val-168 enclose the LysM domain. Disordered stretches follow at residues Leu-335–Glu-373 and Asp-401–Gly-443. Residues Asp-401–Ser-422 are compositionally biased toward basic and acidic residues. Residues Ala-746 to Glu-907 form the TLDc domain.

This sequence belongs to the OXR1 family.

Its subcellular location is the nucleus. In terms of biological role, enhances the transcriptional activities of several nuclear receptors. The chain is Nuclear receptor coactivator 7 (NCOA7) from Gallus gallus (Chicken).